The primary structure comprises 718 residues: SANT and BTB domain regulator of class switch recombination (718 aa).

An SANT domain is found at 21 to 59 (DMILYPLIGIPQTINWETIARLVPGLTPKECAKRFDELK). The segment covering 118–134 (ASTRNCSSESENCTTHN) has biased composition (polar residues). A disordered region spans residues 118–142 (ASTRNCSSESENCTTHNGGEMTEES). The region spanning 147-255 (MVIHVCDEAK…QCIQYCHKNM (109 aa)) is the BTB domain. Residues 555–576 (SEEEEYTTGSEVTEDEVGDEEE) are compositionally biased toward acidic residues. 2 disordered regions span residues 555 to 622 (SEEE…SPFV) and 692 to 718 (SVPV…GRPA). Residues 580–595 (KQRKKEKPKKFTRQPK) are compositionally biased toward basic residues. Over residues 604–615 (QRKEKALEKSAS) the composition is skewed to basic and acidic residues.

The protein belongs to the KIAA1841 family. As to quaternary structure, homodimer. Interacts (via the BTB domain) with HDAC1 and NCOR2.

Negatively regulates class switch recombination or isotype switching in splenic B-cells. In Homo sapiens (Human), this protein is SANT and BTB domain regulator of class switch recombination.